The sequence spans 489 residues: MNTTTPMGMLQQPRPFFMIFFVELWERFGYYGVQGVLAVFFVKQLGFSQEQAFVTFGAFAALVYGLISIGGYVGDHLLGTKRTIVLGALVLAIGYFMTGLSLLKPDLIFIALGTIAVGNGLFKANPASLLSKCYPPKAPRLDGAFTLFYMSINIGSLIALSLAPVIADRFGYSVTYNLCGAGLIIALLVYIACRGMVKDIGSEPDFRPMSFSKLLYVLLGSVVMIFVCAWLMHNVEVANLVLIVLSIVVTIIFFRQAFKLDKTGRNKMFVAFVLMLEAVVFYILYAQMPTSLNFFAINNVHHEILGFSINPVSFQALNPFWVVLASPILAGIYTHLGSKGKDLSMPMKFTLGMFMCSLGFLTAAAAGMWFADAQGLTSPWFIVLVYLFQSLGELFISALGLAMVAALVPQHLMGFILGISFLTQAAAFLLGGYVATFTAVPDNITDPLETLPVYTNVFGKIGLVTLGVAVVMLLMVPWLKRMIAAPESH.

Over 1-27 (MNTTTPMGMLQQPRPFFMIFFVELWER) the chain is Cytoplasmic. A helical membrane pass occupies residues 28–48 (FGYYGVQGVLAVFFVKQLGFS). The Periplasmic segment spans residues 49-52 (QEQA). Residues 53 to 73 (FVTFGAFAALVYGLISIGGYV) form a helical membrane-spanning segment. Over 74–82 (GDHLLGTKR) the chain is Cytoplasmic. A helical transmembrane segment spans residues 83 to 103 (TIVLGALVLAIGYFMTGLSLL). Topologically, residues 104 to 106 (KPD) are periplasmic. Residues 107–127 (LIFIALGTIAVGNGLFKANPA) form a helical membrane-spanning segment. The Cytoplasmic segment spans residues 128 to 146 (SLLSKCYPPKAPRLDGAFT). The helical transmembrane segment at 147–167 (LFYMSINIGSLIALSLAPVIA) threads the bilayer. The Periplasmic portion of the chain corresponds to 168–172 (DRFGY). Residues 173–193 (SVTYNLCGAGLIIALLVYIAC) form a helical membrane-spanning segment. The Cytoplasmic segment spans residues 194–210 (RGMVKDIGSEPDFRPMS). A helical transmembrane segment spans residues 211–231 (FSKLLYVLLGSVVMIFVCAWL). The Periplasmic portion of the chain corresponds to 232–233 (MH). The helical transmembrane segment at 234 to 254 (NVEVANLVLIVLSIVVTIIFF) threads the bilayer. Residues 255 to 267 (RQAFKLDKTGRNK) are Cytoplasmic-facing. A helical transmembrane segment spans residues 268–288 (MFVAFVLMLEAVVFYILYAQM). Topologically, residues 289–311 (PTSLNFFAINNVHHEILGFSINP) are periplasmic. Residues 312–332 (VSFQALNPFWVVLASPILAGI) form a helical membrane-spanning segment. Residues 333–350 (YTHLGSKGKDLSMPMKFT) are Cytoplasmic-facing. The helical transmembrane segment at 351–371 (LGMFMCSLGFLTAAAAGMWFA) threads the bilayer. Residues 372 to 380 (DAQGLTSPW) are Periplasmic-facing. Residues 381 to 401 (FIVLVYLFQSLGELFISALGL) form a helical membrane-spanning segment. At 402 to 411 (AMVAALVPQH) the chain is on the cytoplasmic side. Residues 412–432 (LMGFILGISFLTQAAAFLLGG) traverse the membrane as a helical segment. Residues 433 to 456 (YVATFTAVPDNITDPLETLPVYTN) lie on the Periplasmic side of the membrane. The chain crosses the membrane as a helical span at residues 457–477 (VFGKIGLVTLGVAVVMLLMVP). Residues 478 to 489 (WLKRMIAAPESH) are Cytoplasmic-facing.

The protein belongs to the major facilitator superfamily. Proton-dependent oligopeptide transporter (POT/PTR) (TC 2.A.17) family. DtpB subfamily.

It is found in the cell inner membrane. Functionally, proton-dependent permease that transports di- and tripeptides. The sequence is that of Dipeptide and tripeptide permease B from Shigella dysenteriae serotype 1 (strain Sd197).